Reading from the N-terminus, the 498-residue chain is Lysine--tRNA ligase (498 aa).

The Mg(2+) site is built by Glu407 and Glu414.

Belongs to the class-II aminoacyl-tRNA synthetase family. Homodimer. Requires Mg(2+) as cofactor.

It is found in the cytoplasm. The catalysed reaction is tRNA(Lys) + L-lysine + ATP = L-lysyl-tRNA(Lys) + AMP + diphosphate. This Rhizobium etli (strain CIAT 652) protein is Lysine--tRNA ligase.